Here is a 264-residue protein sequence, read N- to C-terminus: MDIALKEKTDTEMVFVVSGVTVPFINAIRRICMMEVPKLAIEYVNMYRNDAKMFDEVLAHRLGLVPLAADPEFAESLKMPEECDCEEYCSECSVSLTLRKKGPGVVYSGDLVSETPAVKPVYPDIPLVKLGDDDELELEAVAQLGVGREHAKWEPTTACAYKYYPRIEFSEDCDECLECIEACPRDVLGEESGKPVVVDLENCSMCKSCVRACDKRAIDVGYEEGKFIFRIETDGSVDPKDVLLKACDILRDKAEQVITFCEGG.

Residues C203, C206, and C209 each contribute to the [3Fe-4S] cluster site.

This sequence belongs to the archaeal Rpo3/eukaryotic RPB3 RNA polymerase subunit family. In terms of assembly, part of the RNA polymerase complex. Requires [3Fe-4S] cluster as cofactor.

The protein resides in the cytoplasm. The enzyme catalyses RNA(n) + a ribonucleoside 5'-triphosphate = RNA(n+1) + diphosphate. DNA-dependent RNA polymerase (RNAP) catalyzes the transcription of DNA into RNA using the four ribonucleoside triphosphates as substrates. The chain is DNA-directed RNA polymerase subunit Rpo3 from Methanothermobacter thermautotrophicus (strain ATCC 29096 / DSM 1053 / JCM 10044 / NBRC 100330 / Delta H) (Methanobacterium thermoautotrophicum).